The sequence spans 134 residues: Holo-[acyl-carrier-protein] synthase (134 aa).

Mg(2+)-binding residues include Asp-8 and Glu-57.

It belongs to the P-Pant transferase superfamily. AcpS family. Mg(2+) serves as cofactor.

Its subcellular location is the cytoplasm. The enzyme catalyses apo-[ACP] + CoA = holo-[ACP] + adenosine 3',5'-bisphosphate + H(+). In terms of biological role, transfers the 4'-phosphopantetheine moiety from coenzyme A to a Ser of acyl-carrier-protein. In Rhizobium rhizogenes (strain K84 / ATCC BAA-868) (Agrobacterium radiobacter), this protein is Holo-[acyl-carrier-protein] synthase.